The primary structure comprises 80 residues: Defensin-like protein 14 (80 aa).

An N-terminal signal peptide occupies residues 1 to 29 (MAKSAAIITFLFAALVLFAAFEAPIMVEA). Glutamine 30 carries the pyrrolidone carboxylic acid modification. Cystine bridges form between cysteine 33–cysteine 80, cysteine 44–cysteine 65, cysteine 50–cysteine 74, and cysteine 54–cysteine 76.

The protein belongs to the DEFL family.

The protein localises to the secreted. Its function is as follows. Confers broad-spectrum resistance to pathogens. Has antifungal activity in vitro. The chain is Defensin-like protein 14 (PDF1.3) from Arabidopsis thaliana (Mouse-ear cress).